A 746-amino-acid polypeptide reads, in one-letter code: F-box only protein 30 (746 aa).

The TRAF-type zinc finger occupies 49–110; it reads EHRLLCPFER…SYSDRKSYES (62 aa). 2 disordered regions span residues 222-241 and 247-266; these read MDEE…DQDH and IGAV…QAEQ. Residues 225 to 241 show a composition bias toward basic and acidic residues; the sequence is ENNKESFQDKNLKDQDH. Residues 256-266 are compositionally biased toward polar residues; that stretch reads SGTSQNAQAEQ. Phosphoserine is present on serine 383. In terms of domain architecture, F-box spans 611-659; that stretch reads SDHLSSLPFEVLQHIAGFLDGFSLCQLACVSRLMRDVCGSLLQSRGMVI.

Part of a SCF (SKP1-cullin-F-box) protein ligase complex. Interacts with SKP1, CUL1 and RBX1/ROC1. Post-translationally, auto-ubiquitinated. May be neddylated. Neddylation may be required for E3 ligase activity, since it was observed only after purification with o-phenanthroline.

Its pathway is protein modification; protein ubiquitination. Its function is as follows. Substrate-recognition component of the SCF (SKP1-CUL1-F-box protein)-type E3 ubiquitin ligase complex. Required for muscle atrophy following denervation. This is F-box only protein 30 (Fbxo30) from Mus musculus (Mouse).